The chain runs to 211 residues: Beta-crystallin B3 (211 aa).

Positions 1–21 are disordered; sequence MTEQQSPPEQMVTGEGAGERG. Residues 1–23 form an N-terminal arm region; sequence MTEQQSPPEQMVTGEGAGERGGN. 2 consecutive Beta/gamma crystallin 'Greek key' domains span residues 24–63 and 64–108; these read YKIT…QVES and GPWL…RPLQ. The tract at residues 109–113 is connecting peptide; the sequence is IDSPD. 2 consecutive Beta/gamma crystallin 'Greek key' domains span residues 114–155 and 156–198; these read HKIH…RALN and GTWV…RRVR. Positions 200–211 are C-terminal arm; the sequence is QQWHQRGSFENS.

Belongs to the beta/gamma-crystallin family. In terms of assembly, homo/heterodimer, or complexes of higher-order. The structure of beta-crystallin oligomers seems to be stabilized through interactions between the N-terminal arms.

Functionally, crystallins are the dominant structural components of the vertebrate eye lens. The chain is Beta-crystallin B3 (CRYBB3) from Gallus gallus (Chicken).